Here is a 562-residue protein sequence, read N- to C-terminus: Phosphomethylpyrimidine synthase (562 aa).

Substrate-binding positions include asparagine 179, methionine 208, tyrosine 237, histidine 273, 293–295 (SRG), 334–337 (DGLR), and glutamate 373. Histidine 377 provides a ligand contact to Zn(2+). Tyrosine 400 lines the substrate pocket. Histidine 441 lines the Zn(2+) pocket. Residues cysteine 521, cysteine 524, and cysteine 529 each coordinate [4Fe-4S] cluster.

This sequence belongs to the ThiC family. Requires [4Fe-4S] cluster as cofactor.

It carries out the reaction 5-amino-1-(5-phospho-beta-D-ribosyl)imidazole + S-adenosyl-L-methionine = 4-amino-2-methyl-5-(phosphooxymethyl)pyrimidine + CO + 5'-deoxyadenosine + formate + L-methionine + 3 H(+). It functions in the pathway cofactor biosynthesis; thiamine diphosphate biosynthesis. Functionally, catalyzes the synthesis of the hydroxymethylpyrimidine phosphate (HMP-P) moiety of thiamine from aminoimidazole ribotide (AIR) in a radical S-adenosyl-L-methionine (SAM)-dependent reaction. In Geobacillus kaustophilus (strain HTA426), this protein is Phosphomethylpyrimidine synthase.